We begin with the raw amino-acid sequence, 318 residues long: Acetyl-coenzyme A carboxylase carboxyl transferase subunit alpha (318 aa).

The region spanning asparagine 32 to arginine 293 is the CoA carboxyltransferase C-terminal domain.

This sequence belongs to the AccA family. In terms of assembly, acetyl-CoA carboxylase is a heterohexamer composed of biotin carboxyl carrier protein (AccB), biotin carboxylase (AccC) and two subunits each of ACCase subunit alpha (AccA) and ACCase subunit beta (AccD).

It localises to the cytoplasm. The enzyme catalyses N(6)-carboxybiotinyl-L-lysyl-[protein] + acetyl-CoA = N(6)-biotinyl-L-lysyl-[protein] + malonyl-CoA. It participates in lipid metabolism; malonyl-CoA biosynthesis; malonyl-CoA from acetyl-CoA: step 1/1. In terms of biological role, component of the acetyl coenzyme A carboxylase (ACC) complex. First, biotin carboxylase catalyzes the carboxylation of biotin on its carrier protein (BCCP) and then the CO(2) group is transferred by the carboxyltransferase to acetyl-CoA to form malonyl-CoA. The sequence is that of Acetyl-coenzyme A carboxylase carboxyl transferase subunit alpha from Saccharophagus degradans (strain 2-40 / ATCC 43961 / DSM 17024).